The sequence spans 214 residues: MRIILLGAPGAGKGTQAQFIMQQYGIPQISTGDMLRAAVKAGTPLGLEAKKVMDAGQLVSDELIIGLVKERIAQDDCVKGFLLDGFPRTIPQADAMAANGIEIDHVIEIDVPDEEIVKRMSGRRVHSGSGRVYHVVFNPPKVEGKDDVTGEDLSIRPDDEESTVRKRLDIYHEQTKPLVEYYGNVAAQGKTQYNKFDGTQSVAAVSEQLAKVIG.

10–15 lines the ATP pocket; sequence GAGKGT. An NMP region spans residues 30 to 59; that stretch reads STGDMLRAAVKAGTPLGLEAKKVMDAGQLV. Residues threonine 31, arginine 36, 57–59, 85–88, and glutamine 92 contribute to the AMP site; these read QLV and GFPR. Residues 122–159 form an LID region; sequence GRRVHSGSGRVYHVVFNPPKVEGKDDVTGEDLSIRPDD. ATP is bound by residues arginine 123 and 132–133; that span reads VY. Arginine 156 and arginine 167 together coordinate AMP. Glutamine 200 provides a ligand contact to ATP.

It belongs to the adenylate kinase family. Monomer.

It is found in the cytoplasm. The enzyme catalyses AMP + ATP = 2 ADP. It participates in purine metabolism; AMP biosynthesis via salvage pathway; AMP from ADP: step 1/1. Catalyzes the reversible transfer of the terminal phosphate group between ATP and AMP. Plays an important role in cellular energy homeostasis and in adenine nucleotide metabolism. The chain is Adenylate kinase from Shewanella denitrificans (strain OS217 / ATCC BAA-1090 / DSM 15013).